A 511-amino-acid chain; its full sequence is ADP,ATP carrier protein 4 (511 aa).

Transmembrane regions (helical) follow at residues 34–54 (VSKFLFITLLMFCILFIQNLI), 71–91 (ISFLKFWGVMPSAFLMTAIYV), 102–122 (IFYLIISIFLAFFALFAYVIF), 157–177 (FSLFYIIAELWPNVVFALLFW), 192–212 (FYPLFGLLSQTGIYLAGQFLE), 231–251 (FHTLSIQIILTIVLILGIIAI), 296–316 (LIATLLICYGIAINLVEGPWK), 330–350 (AAFIGSYLSYTGVFTILFVVL), 361–381 (FTAAVITPLIVFITGILFFAV), 390–410 (LIIANFILTDPALIAITIGAI), 453–473 (LGKSGSAFLQSLVFIILPSAS), and 476–496 (SISICLMIIFIITCLTWLWAT).

Belongs to the ADP/ATP translocase tlc family.

Its subcellular location is the cell membrane. Its function is as follows. Provides the rickettsial cell with host ATP in exchange for rickettsial ADP. This is an obligate exchange system. This energy acquiring activity is an important component of rickettsial parasitism. This chain is ADP,ATP carrier protein 4 (tlcD), found in Rickettsia felis (strain ATCC VR-1525 / URRWXCal2) (Rickettsia azadi).